The following is a 76-amino-acid chain: MQLVLAAKYIGAGISTIGLLGAGIGIAIVFAALINGVSRNPSLRETLFPMAILGFALSEATGLFCLMISFLLIYAV.

Helical transmembrane passes span 14 to 34 (ISTIGLLGAGIGIAIVFAALI) and 52 to 72 (ILGFALSEATGLFCLMISFLL).

This sequence belongs to the ATPase C chain family. In terms of assembly, F-type ATPases have 2 components, CF(1) - the catalytic core - and CF(0) - the membrane proton channel. CF(1) has five subunits: alpha(3), beta(3), gamma(1), delta(1), epsilon(1). CF(0) has three main subunits: a, b and c.

The protein resides in the mitochondrion membrane. In terms of biological role, mitochondrial membrane ATP synthase (F(1)F(0) ATP synthase or Complex V) produces ATP from ADP in the presence of a proton gradient across the membrane which is generated by electron transport complexes of the respiratory chain. F-type ATPases consist of two structural domains, F(1) - containing the extramembraneous catalytic core and F(0) - containing the membrane proton channel, linked together by a central stalk and a peripheral stalk. During catalysis, ATP synthesis in the catalytic domain of F(1) is coupled via a rotary mechanism of the central stalk subunits to proton translocation. Part of the complex F(0) domain. A homomeric c-ring of probably 10 subunits is part of the complex rotary element. The polypeptide is ATP synthase subunit 9, mitochondrial (ATP9) (Vanderwaltozyma polyspora (strain ATCC 22028 / DSM 70294 / BCRC 21397 / CBS 2163 / NBRC 10782 / NRRL Y-8283 / UCD 57-17) (Kluyveromyces polysporus)).